The chain runs to 103 residues: UPF0145 protein CYB_1351 (103 aa).

Belongs to the UPF0145 family.

The sequence is that of UPF0145 protein CYB_1351 from Synechococcus sp. (strain JA-2-3B'a(2-13)) (Cyanobacteria bacterium Yellowstone B-Prime).